Consider the following 259-residue polypeptide: 5'-nucleotidase SurE (259 aa).

The a divalent metal cation site is built by Asp-8, Asp-9, Ser-39, and Asn-95.

This sequence belongs to the SurE nucleotidase family. Requires a divalent metal cation as cofactor.

The protein resides in the cytoplasm. It carries out the reaction a ribonucleoside 5'-phosphate + H2O = a ribonucleoside + phosphate. In terms of biological role, nucleotidase that shows phosphatase activity on nucleoside 5'-monophosphates. This chain is 5'-nucleotidase SurE, found in Pseudothermotoga lettingae (strain ATCC BAA-301 / DSM 14385 / NBRC 107922 / TMO) (Thermotoga lettingae).